The primary structure comprises 204 residues: Methylthioribulose-1-phosphate dehydratase (204 aa).

Zn(2+) is bound by residues His94 and His96.

It belongs to the aldolase class II family. MtnB subfamily. It depends on Zn(2+) as a cofactor.

The catalysed reaction is 5-(methylsulfanyl)-D-ribulose 1-phosphate = 5-methylsulfanyl-2,3-dioxopentyl phosphate + H2O. It functions in the pathway amino-acid biosynthesis; L-methionine biosynthesis via salvage pathway; L-methionine from S-methyl-5-thio-alpha-D-ribose 1-phosphate: step 2/6. In terms of biological role, catalyzes the dehydration of methylthioribulose-1-phosphate (MTRu-1-P) into 2,3-diketo-5-methylthiopentyl-1-phosphate (DK-MTP-1-P). The polypeptide is Methylthioribulose-1-phosphate dehydratase (Pseudomonas syringae pv. tomato (strain ATCC BAA-871 / DC3000)).